The sequence spans 342 residues: Ribosomal RNA small subunit methyltransferase C (342 aa).

This sequence belongs to the methyltransferase superfamily. RsmC family. As to quaternary structure, monomer.

It is found in the cytoplasm. It catalyses the reaction guanosine(1207) in 16S rRNA + S-adenosyl-L-methionine = N(2)-methylguanosine(1207) in 16S rRNA + S-adenosyl-L-homocysteine + H(+). In terms of biological role, specifically methylates the guanine in position 1207 of 16S rRNA in the 30S particle. This is Ribosomal RNA small subunit methyltransferase C from Salmonella agona (strain SL483).